Consider the following 152-residue polypeptide: UPF0225 protein YchJ (152 aa).

The protein belongs to the UPF0225 family.

In Escherichia coli O17:K52:H18 (strain UMN026 / ExPEC), this protein is UPF0225 protein YchJ.